Here is a 647-residue protein sequence, read N- to C-terminus: Putative lipase atg15 (647 aa).

Residues 1-18 (MLPSGKRKADAFSCTSAA) lie on the Cytoplasmic side of the membrane. The helical; Signal-anchor for type II membrane protein transmembrane segment at 19-39 (RVTAKLALSFLALSTTPLVNA) threads the bilayer. Topologically, residues 40 to 647 (FSYEEPNAQI…EGGEGPVNDL (608 aa)) are lumenal. N-linked (GlcNAc...) asparagine glycans are attached at residues asparagine 203, asparagine 225, asparagine 283, and asparagine 307. The active-site Charge relay system is serine 323. A glycan (N-linked (GlcNAc...) asparagine) is linked at asparagine 469. The segment at 597–626 (APALPSSVLTPSATATPPEGQPDDSGKRCR) is disordered.

This sequence belongs to the AB hydrolase superfamily. Lipase family. Binds to both phosphatidylinositol (PI) and phosphatidylinositol 3,5-bisphosphate (PIP2).

It localises to the endosome. The protein localises to the multivesicular body membrane. Its subcellular location is the prevacuolar compartment membrane. It catalyses the reaction a triacylglycerol + H2O = a diacylglycerol + a fatty acid + H(+). In terms of biological role, lipase which is essential for lysis of subvacuolar cytoplasm to vacuole targeted bodies and intravacuolar autophagic bodies. Involved in the lysis of intravacuolar multivesicular body (MVB) vesicles. The intravacuolar membrane disintegration by atg15 is critical to life span extension. The polypeptide is Putative lipase atg15 (atg15) (Neurospora crassa (strain ATCC 24698 / 74-OR23-1A / CBS 708.71 / DSM 1257 / FGSC 987)).